Consider the following 969-residue polypeptide: Endogenous retrovirus group K member 11 Pol protein (969 aa).

One can recognise a Reverse transcriptase domain in the interval 57–245 (LEKGHIEPSF…TPFHYLGMQI (189 aa)). An LPQG motif is present at residues 161–164 (LPQG). Positions 460 to 590 (LENALTVFTD…ADLLVSSALI (131 aa)) constitute an RNase H type-1 domain. Residues Asp-469, Glu-497, Asp-517, and Asp-582 each contribute to the Mg(2+) site. An Integrase-type zinc finger spans residues 587–628 (SALIKAQELHALTHVNAAGLKNKFDVTWKQAKDIVQHCTQCQ). Zn(2+) contacts are provided by His-596, His-600, Cys-624, and Cys-627. An Integrase catalytic domain is found at 642–803 (RGLCPNALWQ…TSAEQHLTGK (162 aa)). A DNA-binding region (integrase-type) is located at residues 811–859 (KLIWWKDNKNKTWEIGKVITWGRGFACVSPGENQLPVWIPTRHLKFYNE).

It belongs to the beta type-B retroviral polymerase family. HERV class-II K(HML-2) pol subfamily.

The enzyme catalyses DNA(n) + a 2'-deoxyribonucleoside 5'-triphosphate = DNA(n+1) + diphosphate. It carries out the reaction Endonucleolytic cleavage to 5'-phosphomonoester.. Early post-infection, the reverse transcriptase converts the viral RNA genome into double-stranded viral DNA. The RNase H domain of the reverse transcriptase performs two functions. It degrades the RNA template and specifically removes the RNA primer from the RNA/DNA hybrid. Following nuclear import, the integrase catalyzes the insertion of the linear, double-stranded viral DNA into the host cell chromosome. Endogenous Pol proteins may have kept, lost or modified their original function during evolution. This is Endogenous retrovirus group K member 11 Pol protein (ERVK-11) from Homo sapiens (Human).